Consider the following 490-residue polypeptide: Glutamyl-tRNA(Gln) amidotransferase subunit A (490 aa).

Catalysis depends on charge relay system residues lysine 78 and serine 158. A disordered region spans residues 131–159 (SNETSRFGPPINPWRRKGDNAGLTPGGSS). The active-site Acyl-ester intermediate is serine 182.

It belongs to the amidase family. GatA subfamily. As to quaternary structure, heterotrimer of A, B and C subunits.

It catalyses the reaction L-glutamyl-tRNA(Gln) + L-glutamine + ATP + H2O = L-glutaminyl-tRNA(Gln) + L-glutamate + ADP + phosphate + H(+). Functionally, allows the formation of correctly charged Gln-tRNA(Gln) through the transamidation of misacylated Glu-tRNA(Gln) in organisms which lack glutaminyl-tRNA synthetase. The reaction takes place in the presence of glutamine and ATP through an activated gamma-phospho-Glu-tRNA(Gln). The sequence is that of Glutamyl-tRNA(Gln) amidotransferase subunit A from Hyphomonas neptunium (strain ATCC 15444).